An 843-amino-acid chain; its full sequence is General transcription and DNA repair factor IIH helicase/translocase subunit XPB/SSL2 (843 aa).

A disordered region spans residues 1 to 85 (MTDVEGYQPK…TAADSSMNQM (85 aa)). A compositionally biased stretch (acidic residues) spans 26 to 41 (SDEDSPATDAEIDENY). The span at 42–56 (DDNRETSEGRGERDT) shows a compositional bias: basic and acidic residues. A compositionally biased stretch (basic residues) spans 64-74 (KKPRKKTKSSR). The Nuclear localization signal signature appears at 64–75 (KKPRKKTKSSRH). Residues 373 to 535 (MFGNGRARSG…DLNFLIGPKL (163 aa)) enclose the Helicase ATP-binding domain. 386 to 393 (LPCGAGKT) provides a ligand contact to ATP. The short motif at 488–491 (DEVH) is the DEAH box element. Residues 589-743 (QACQFLIQYH…KVITHLHGME (155 aa)) enclose the Helicase C-terminal domain. Position 752 is a phosphoserine (serine 752).

This sequence belongs to the helicase family. RAD25/XPB subfamily. In terms of assembly, component of the 7-subunit TFIIH core complex composed of XPB/SSL2, XPD/RAD3, SSL1, TFB1, TFB2, TFB4 and TFB5, which is active in NER. The core complex associates with the 3-subunit CTD-kinase module TFIIK composed of CCL1, KIN28 and TFB3 to form the 10-subunit holoenzyme (holo-TFIIH) active in transcription. An additionnal subunit, TFB6, plays a role in the dissociation of the SSL2 helicase from TFIIH after transcription initiation. Interacts directly with TFB6. Requires Mg(2+) as cofactor.

It localises to the nucleus. It catalyses the reaction Couples ATP hydrolysis with the unwinding of duplex DNA by translocating in the 3'-5' direction.. It carries out the reaction ATP + H2O = ADP + phosphate + H(+). In terms of biological role, ATP-dependent DNA translocase. Component of the general transcription and DNA repair factor IIH (TFIIH) core complex. When complexed to CDK-activating kinase (CAK), involved in RNA transcription by RNA polymerase II. May have 3'-5' helicase activity alone, the TFIIH core however has no 3'-5' helicase activity. Also involved in transcription-coupled nucleotide excision repair (NER) of damaged DNA. In NER, TFIIH acts by opening DNA around the lesion to allow the excision of the damaged oligonucleotide and its replacement by a new DNA fragment. The ATPase activity of XPB/SSL2, but not its helicase activity, is required for DNA opening. In transcription, TFIIH has an essential role in transcription initiation. When the pre-initiation complex (PIC) has been established, TFIIH is required for promoter opening and promoter escape. The ATP-dependent helicase activity of XPB/SSL2 is required for promoter opening and promoter escape. XPB/SSL2 acts as a double-stranded DNA translocase, promoting DNA opening by tracking in a 5'-3' dirction along the nontemplate promoter strand, rotating and inserting DNA into the Pol II active site cleft, leading to DNA unwinding. A dsDNA-stimulated ATPase, dATP and ATP are equally good substrates. May also use this translocase mechanism during DNA repair rather than physically wedging open damaged DNA. This is General transcription and DNA repair factor IIH helicase/translocase subunit XPB/SSL2 from Saccharomyces cerevisiae (strain ATCC 204508 / S288c) (Baker's yeast).